Reading from the N-terminus, the 178-residue chain is Interleukin-10 (178 aa).

Residues 1-18 (MPGSALLCCLLLLAGVKT) form the signal peptide. N29 is a glycosylation site (N-linked (GlcNAc...) asparagine). 2 disulfide bridges follow: C30/C126 and C80/C132. An N-linked (GlcNAc...) asparagine glycan is attached at N134.

This sequence belongs to the IL-10 family. As to quaternary structure, homodimer. Interacts with IL10RA and IL10RB.

Its subcellular location is the secreted. Its function is as follows. Major immune regulatory cytokine that acts on many cells of the immune system where it has profound anti-inflammatory functions, limiting excessive tissue disruption caused by inflammation. Mechanistically, IL10 binds to its heterotetrameric receptor comprising IL10RA and IL10RB leading to JAK1 and STAT2-mediated phosphorylation of STAT3. In turn, STAT3 translocates to the nucleus where it drives expression of anti-inflammatory mediators. Targets antigen-presenting cells (APCs) such as macrophages and monocytes and inhibits their release of pro-inflammatory cytokines including granulocyte-macrophage colony-stimulating factor /GM-CSF, granulocyte colony-stimulating factor/G-CSF, IL-1 alpha, IL-1 beta, IL-6, IL-8 and TNF-alpha. Also interferes with antigen presentation by reducing the expression of MHC-class II and co-stimulatory molecules, thereby inhibiting their ability to induce T cell activation. In addition, controls the inflammatory response of macrophages by reprogramming essential metabolic pathways including mTOR signaling. The sequence is that of Interleukin-10 (Il10) from Rattus norvegicus (Rat).